A 354-amino-acid chain; its full sequence is Glycerol-1-phosphate dehydrogenase [NAD(P)+] (354 aa).

NAD(+) contacts are provided by residues 103–107 (GRSVD) and 125–128 (TAAS). D130 contacts substrate. S134 lines the NAD(+) pocket. D176 contributes to the substrate binding site. Residues D176 and H255 each contribute to the Zn(2+) site. H259 lines the substrate pocket. H271 is a Zn(2+) binding site.

The protein belongs to the glycerol-1-phosphate dehydrogenase family. As to quaternary structure, homodimer. Zn(2+) serves as cofactor.

It localises to the cytoplasm. It carries out the reaction sn-glycerol 1-phosphate + NAD(+) = dihydroxyacetone phosphate + NADH + H(+). It catalyses the reaction sn-glycerol 1-phosphate + NADP(+) = dihydroxyacetone phosphate + NADPH + H(+). Its pathway is membrane lipid metabolism; glycerophospholipid metabolism. In terms of biological role, catalyzes the NAD(P)H-dependent reduction of dihydroxyacetonephosphate (DHAP or glycerone phosphate) to glycerol 1-phosphate (G1P). The G1P thus generated is used as the glycerophosphate backbone of phospholipids in the cellular membranes of Archaea. This Nitrosopumilus maritimus (strain SCM1) protein is Glycerol-1-phosphate dehydrogenase [NAD(P)+].